We begin with the raw amino-acid sequence, 310 residues long: Iron ABC transporter substrate-binding lipoprotein MtsA (310 aa).

Positions 1–20 (MGKRMSLILGAFLSVFLLVA) are cleaved as a signal peptide. C21 carries N-palmitoyl cysteine lipidation. C21 is lipidated: S-diacylglycerol cysteine. Positions 68, 140, 206, and 281 each coordinate Fe(2+).

The protein belongs to the bacterial solute-binding protein 9 family. Lipoprotein receptor antigen (Lrai) subfamily.

It is found in the cell membrane. In terms of biological role, part of the ATP-binding cassette (ABC) transport system MtsABC involved in iron import. Binds iron with high affinity and specificity and delivers it to the membrane permease for translocation into the cytoplasm. Has low affinity for Zn(2+) and Cu(2+). In Streptococcus pyogenes serotype M1, this protein is Iron ABC transporter substrate-binding lipoprotein MtsA (mtsA).